The sequence spans 673 residues: NACHT, LRR and PYD domains-containing protein 10 (673 aa).

A Pyrin domain is found at 1 to 92 (MALARANSPQ…VDYLNQVCLN (92 aa)). The NACHT domain occupies 163–469 (PIVVMQGSAG…AMSFLVKEDQ (307 aa)). 169–176 (GSAGTGKT) provides a ligand contact to ATP. Residues 578–673 (SDKKKSVSVT…DGEMIDKMNG (96 aa)) are disordered. Residues 584–597 (VSVTSSFSSGKVQS) show a composition bias toward low complexity. The span at 633–648 (ASREKGHMEMNDKEDG) shows a compositional bias: basic and acidic residues. A compositionally biased stretch (acidic residues) spans 649–658 (GVEEQEDEEG). Residues 659–673 (QTLKKDGEMIDKMNG) are compositionally biased toward basic and acidic residues.

Belongs to the NLRP family. In terms of assembly, oligomerizes. Interacts with PYCARD. Also interacts with CASP1 and IL1B. Interacts with NOD1 and components of the NOD1 signaling pathway including RIPK2, NR2C2/TAK1 and IKBKG/NEMO. In terms of tissue distribution, expressed in skin, tongue, heart, colon and several cell lines of hematopoietic and myocytic origin but not in kidney, skeletal muscle, spleen, liver, lung, thymus, brain or small intestine (at protein level).

The protein resides in the cytoplasm. The protein localises to the cell membrane. Inhibits autoprocessing of CASP1, CASP1-dependent IL1B secretion, PYCARD aggregation and PYCARD-mediated apoptosis but not apoptosis induced by FAS or BID. Displays anti-inflammatory activity. Required for immunity against C.albicans infection. Involved in the innate immune response by contributing to pro-inflammatory cytokine release in response to invasive bacterial infection. Contributes to T-cell-mediated inflammatory responses in the skin. Plays a role in protection against periodontitis through its involvement in induction of IL1A via ERK activation in oral epithelial cells infected with periodontal pathogens. Exhibits both ATPase and GTPase activities. The sequence is that of NACHT, LRR and PYD domains-containing protein 10 (Nlrp10) from Mus musculus (Mouse).